The chain runs to 134 residues: MILGIGTDLANIERIARTLDRFGDRFRNRVFTDIEQVKAERRKDVAGTYAKRWAAKEACSKALGTGLAMGIAWKDMSVTNLKSGQPVMHVTGWAQERLAAMTPPGHEAVIHVTLTDDHPWAQAFVVIEALPLKS.

The Mg(2+) site is built by Asp8 and Glu57.

This sequence belongs to the P-Pant transferase superfamily. AcpS family. The cofactor is Mg(2+).

It localises to the cytoplasm. The enzyme catalyses apo-[ACP] + CoA = holo-[ACP] + adenosine 3',5'-bisphosphate + H(+). Transfers the 4'-phosphopantetheine moiety from coenzyme A to a Ser of acyl-carrier-protein. The sequence is that of Holo-[acyl-carrier-protein] synthase from Roseobacter denitrificans (strain ATCC 33942 / OCh 114) (Erythrobacter sp. (strain OCh 114)).